Reading from the N-terminus, the 221-residue chain is Veficolin-1 (221 aa).

The N-terminal stretch at 1–25 (MTAWLDFPLALSPLVVVSMKGGSFG) is a signal peptide. A Collagen-like domain is found at 50 to 104 (QGQAGIPGIPGVPGTNGLPGAKGDLGPQGPPGERGSTGIPGKAGPKGDKGDQGEA). The tract at residues 54-104 (GIPGIPGVPGTNGLPGAKGDLGPQGPPGERGSTGIPGKAGPKGDKGDQGEA) is disordered. Residues 111–221 (QQQEAGAKDC…DFNNSKTFAK (111 aa)) enclose the Fibrinogen C-terminal domain. C120 and C148 are disulfide-bonded.

This sequence belongs to the ficolin lectin family. Veficolin subfamily. As to expression, expressed by the mandibular venom duct.

It is found in the secreted. Initiates complement activation and/or interferes in platelet aggregation and/or blood coagulation. The chain is Veficolin-1 from Varanus komodoensis (Komodo dragon).